A 721-amino-acid chain; its full sequence is Mitogen-activated protein kinase 6 (721 aa).

Residue Met1 forms a Peptide (Met-Gly) (interchain with G-Cter in ubiquitin) linkage. A Protein kinase domain is found at 20–316 (YMDLKPLGCG…AEEALSHPYM (297 aa)). ATP contacts are provided by residues 26-34 (LGCGGNGLV) and Lys49. Asp152 (proton acceptor) is an active-site residue. Residue Ser189 is modified to Phosphoserine; by PAK1, PAK2 and PAK3. An SEG motif motif is present at residues 189–191 (SEG). Residues 332-337 (FHIEDE) carry the FRIEDE motif motif. Phosphoserine is present on residues Ser386, Ser452, Ser556, Ser558, Ser665, and Ser684. The span at 701 to 715 (AMKSSPQIPHQTYSS) shows a compositional bias: polar residues. Positions 701 to 721 (AMKSSPQIPHQTYSSILKHLN) are disordered.

It belongs to the protein kinase superfamily. CMGC Ser/Thr protein kinase family. MAP kinase subfamily. In terms of assembly, heterodimer with ERK4/MAPK4. Interacts with (via FRIEDE motif) MAPKAPK5. Interacts with UBE3A; this interaction may be indirect and mediated by HERC2, possibly via HERC2 interaction with NEURL4. Mg(2+) is required as a cofactor. Phosphorylated at Ser-189 by PAK1, PAK2 and PAK3 resulting in catalytic activation. Phosphorylated by MAPKAPK5 at other sites. Post-translationally, ubiquitination at Met-1 leads to degradation by the proteasome pathway. Highest expression in the skeletal muscle, followed by the brain. Also found in heart, placenta, lung, liver, pancreas, kidney and skin fibroblasts.

It localises to the cytoplasm. Its subcellular location is the nucleus. The enzyme catalyses L-seryl-[protein] + ATP = O-phospho-L-seryl-[protein] + ADP + H(+). It carries out the reaction L-threonyl-[protein] + ATP = O-phospho-L-threonyl-[protein] + ADP + H(+). Its activity is regulated as follows. Activated by phosphorylation at Ser-189. Functionally, atypical MAPK protein. Phosphorylates microtubule-associated protein 2 (MAP2) and MAPKAPK5. The precise role of the complex formed with MAPKAPK5 is still unclear, but the complex follows a complex set of phosphorylation events: upon interaction with atypical MAPKAPK5, ERK3/MAPK6 is phosphorylated at Ser-189 and then mediates phosphorylation and activation of MAPKAPK5, which in turn phosphorylates ERK3/MAPK6. May promote entry in the cell cycle. The protein is Mitogen-activated protein kinase 6 (MAPK6) of Homo sapiens (Human).